Consider the following 648-residue polypeptide: Bifunctional lysine-specific demethylase and histidyl-hydroxylase NO66 (648 aa).

Positions 1–168 (MSKVSSIFDT…KGAKAAKKNK (168 aa)) are disordered. The segment covering 17–28 (PATTENGAAAKP) has biased composition (low complexity). Basic residues predominate over residues 109 to 119 (DHRKHKEKLRK). The span at 123–137 (GVENSRQAAASTSML) shows a compositional bias: polar residues. Residues 155–168 (PVHHKGAKAAKKNK) are compositionally biased toward basic residues. One can recognise a JmjC domain in the interval 308–453 (CSIRMLNPQT…DLLELYLPHA (146 aa)). Residues His354, Asp356, and His419 each contribute to the Fe cation site.

Belongs to the ROX family. NO66 subfamily. Requires Fe(2+) as cofactor.

It localises to the nucleus. It carries out the reaction N(6),N(6)-dimethyl-L-lysyl(36)-[histone H3] + 2 2-oxoglutarate + 2 O2 = L-lysyl(36)-[histone H3] + 2 formaldehyde + 2 succinate + 2 CO2. Its function is as follows. Oxygenase that can act as both a histone lysine demethylase and a ribosomal histidine hydroxylase. Specifically demethylates 'Lys-4' (H3K4me) and 'Lys-36' (H3K36me) of histone H3, thereby playing a central role in histone code. The sequence is that of Bifunctional lysine-specific demethylase and histidyl-hydroxylase NO66 from Culex quinquefasciatus (Southern house mosquito).